The chain runs to 434 residues: Tol-Pal system protein TolB (434 aa).

The signal sequence occupies residues 1-24 (MKFSAYLTTLFIVLFSLFIQTVQA).

The protein belongs to the TolB family. As to quaternary structure, the Tol-Pal system is composed of five core proteins: the inner membrane proteins TolA, TolQ and TolR, the periplasmic protein TolB and the outer membrane protein Pal. They form a network linking the inner and outer membranes and the peptidoglycan layer.

The protein resides in the periplasm. In terms of biological role, part of the Tol-Pal system, which plays a role in outer membrane invagination during cell division and is important for maintaining outer membrane integrity. The protein is Tol-Pal system protein TolB of Histophilus somni (strain 2336) (Haemophilus somnus).